An 89-amino-acid chain; its full sequence is NADH-ubiquinone oxidoreductase chain 4L (89 aa).

Helical transmembrane passes span 1 to 21 (MNIT…NRKN), 22 to 42 (IILM…LILV), and 57 to 77 (IYII…LVAF).

This sequence belongs to the complex I subunit 4L family.

Its subcellular location is the mitochondrion membrane. The enzyme catalyses a ubiquinone + NADH + 5 H(+)(in) = a ubiquinol + NAD(+) + 4 H(+)(out). In terms of biological role, core subunit of the mitochondrial membrane respiratory chain NADH dehydrogenase (Complex I) that is believed to belong to the minimal assembly required for catalysis. Complex I functions in the transfer of electrons from NADH to the respiratory chain. The immediate electron acceptor for the enzyme is believed to be ubiquinone. The polypeptide is NADH-ubiquinone oxidoreductase chain 4L (ndh-4L) (Neurospora crassa (strain ATCC 24698 / 74-OR23-1A / CBS 708.71 / DSM 1257 / FGSC 987)).